The sequence spans 269 residues: Putative pyruvate, phosphate dikinase regulatory protein (269 aa).

153 to 160 contacts ADP; sequence GVSRTSKT.

Belongs to the pyruvate, phosphate/water dikinase regulatory protein family. PDRP subfamily.

It catalyses the reaction N(tele)-phospho-L-histidyl/L-threonyl-[pyruvate, phosphate dikinase] + ADP = N(tele)-phospho-L-histidyl/O-phospho-L-threonyl-[pyruvate, phosphate dikinase] + AMP + H(+). The enzyme catalyses N(tele)-phospho-L-histidyl/O-phospho-L-threonyl-[pyruvate, phosphate dikinase] + phosphate + H(+) = N(tele)-phospho-L-histidyl/L-threonyl-[pyruvate, phosphate dikinase] + diphosphate. Functionally, bifunctional serine/threonine kinase and phosphorylase involved in the regulation of the pyruvate, phosphate dikinase (PPDK) by catalyzing its phosphorylation/dephosphorylation. The polypeptide is Putative pyruvate, phosphate dikinase regulatory protein (Pediococcus pentosaceus (strain ATCC 25745 / CCUG 21536 / LMG 10740 / 183-1w)).